Consider the following 236-residue polypeptide: Purine nucleoside phosphorylase DeoD-type (236 aa).

Histidine 4 contacts a purine D-ribonucleoside. Phosphate-binding positions include glycine 20, arginine 24, arginine 43, and 87–90 (RVGT). Residues 178 to 180 (EME) and 202 to 203 (SD) each bind a purine D-ribonucleoside. The active-site Proton donor is the aspartate 203.

Belongs to the PNP/UDP phosphorylase family. Homohexamer; trimer of homodimers.

It carries out the reaction a purine D-ribonucleoside + phosphate = a purine nucleobase + alpha-D-ribose 1-phosphate. The catalysed reaction is a purine 2'-deoxy-D-ribonucleoside + phosphate = a purine nucleobase + 2-deoxy-alpha-D-ribose 1-phosphate. In terms of biological role, catalyzes the reversible phosphorolytic breakdown of the N-glycosidic bond in the beta-(deoxy)ribonucleoside molecules, with the formation of the corresponding free purine bases and pentose-1-phosphate. The protein is Purine nucleoside phosphorylase DeoD-type of Geobacillus kaustophilus (strain HTA426).